We begin with the raw amino-acid sequence, 525 residues long: Frizzled-4 (525 aa).

Positions 1–24 (MERRGGGGRMLALLLAGLLGGARG) are cleaved as a signal peptide. Residues 25 to 200 (FGDEEERRCD…KCGYDAGLYS (176 aa)) are Extracellular-facing. The FZ domain maps to 28–149 (EEERRCDAIR…NDHNHMCMEG (122 aa)). 8 disulfides stabilise this stretch: cysteine 33-cysteine 94, cysteine 41-cysteine 87, cysteine 78-cysteine 116, cysteine 105-cysteine 146, cysteine 109-cysteine 133, cysteine 169-cysteine 188, cysteine 192-cysteine 270, and cysteine 290-cysteine 365. An N-linked (GlcNAc...) asparagine glycan is attached at asparagine 47. N-linked (GlcNAc...) asparagine glycosylation occurs at asparagine 132. The helical transmembrane segment at 201-231 (RSAKEFTDIWMAVWASLCFISTAFTVLTFLI) threads the bilayer. Topologically, residues 232–237 (DSSRFS) are cytoplasmic. Residues 238 to 263 (YPERPIIFLSMCYNIYSIAYIVRLTV) form a helical membrane-spanning segment. Residues 264-287 (GRERISCDFEEAAEPVLIQEGLKN) are Extracellular-facing. The chain crosses the membrane as a helical span at residues 288–321 (TGCAIIFLLMYFFGMASSIWWVILTLTWFLAAGL). Residues 322-324 (KWG) lie on the Cytoplasmic side of the membrane. Residues 325–353 (HEAIEMHSSYFHIAAWAIPAVKTIVILIM) form a helical membrane-spanning segment. Residues 354 to 371 (RLVDADELTGLCYVGNQN) are Extracellular-facing. The helical transmembrane segment at 372-406 (LDALTGFVVAPLFTYLVIGTLFIAAGLVALFKIRS) threads the bilayer. Topologically, residues 407 to 419 (NLQKDGTKTDKLE) are cytoplasmic. The chain crosses the membrane as a helical span at residues 420-448 (RLMVKIGVFSVLYTVPATCVIACYFYEIS). Residues 449–461 (NWAVFRYSADDSN) lie on the Extracellular side of the membrane. Residues 462–483 (MAVEMLKIFMSLLVGITSGMWI) form a helical membrane-spanning segment. Residues 484–525 (WSAKTLHTWQKCSNRLVNSGKVKREKRADGWVKPGKGNETVV) lie on the Cytoplasmic side of the membrane. The Lys-Thr-X-X-X-Trp motif, mediates interaction with the PDZ domain of Dvl family members signature appears at 487 to 492 (KTLHTW). Residues 523–525 (TVV) carry the PDZ-binding motif.

This sequence belongs to the G-protein coupled receptor Fz/Smo family. Interacts (via FZ domain) with TSKU; TSKU competes with WNT2B for binding to FZD4, inhibiting Wnt signaling and repressing peripheral eye development. Expressed in the developing kidney, interdigital spaces and optic cup.

It localises to the cell membrane. Receptor for Wnt proteins. Most frizzled receptors are coupled to the beta-catenin canonical signaling pathway, which leads to the activation of disheveled proteins, inhibition of GSK-3 kinase, nuclear accumulation of beta-catenin and activation of Wnt target genes. A second signaling pathway involving PKC and calcium fluxes has been seen for some family members, but it is not yet clear if it represents a distinct pathway or if it can be integrated in the canonical pathway, as PKC seems to be required for Wnt-mediated inactivation of GSK-3 kinase. Both pathways seem to involve interactions with G-proteins. May be involved in transduction and intercellular transmission of polarity information during tissue morphogenesis and/or in differentiated tissues. This Gallus gallus (Chicken) protein is Frizzled-4 (FZD4).